The primary structure comprises 446 residues: Probable ribosomal RNA small subunit methyltransferase B (446 aa).

Residues 260-266 (CAAPGGK), Asp284, Asp311, and Asp330 contribute to the S-adenosyl-L-methionine site. The Nucleophile role is filled by Cys383.

This sequence belongs to the class I-like SAM-binding methyltransferase superfamily. RsmB/NOP family.

The protein resides in the cytoplasm. It carries out the reaction cytidine(967) in 16S rRNA + S-adenosyl-L-methionine = 5-methylcytidine(967) in 16S rRNA + S-adenosyl-L-homocysteine + H(+). Functionally, specifically methylates the cytosine at position 967 (m5C967) of 16S rRNA. The chain is Probable ribosomal RNA small subunit methyltransferase B from Synechocystis sp. (strain ATCC 27184 / PCC 6803 / Kazusa).